A 98-amino-acid chain; its full sequence is Large ribosomal subunit protein eL30 (98 aa).

The protein belongs to the eukaryotic ribosomal protein eL30 family.

This is Large ribosomal subunit protein eL30 (rpl30e) from Methanothermobacter thermautotrophicus (strain ATCC 29096 / DSM 1053 / JCM 10044 / NBRC 100330 / Delta H) (Methanobacterium thermoautotrophicum).